A 305-amino-acid polypeptide reads, in one-letter code: Cytochrome c biogenesis protein CcsA (305 aa).

Helical transmembrane passes span 4–24 (VLGLGLFAFALLLLALPLAFW), 32–52 (SGLVTLLIATANLALTAQLVL), 58–78 (GHFPISNLYESLCFLAWACTL), 91–111 (IVAAAATPMGLGCIAFASFAL), 136–156 (VIMVSYAALLVGSLLSVAVLV), 212–232 (TITVGFLLLTVGIISGAVWAN), 246–263 (TWALICWLVYAAYLHTRL), and 275–295 (VASAGLVVIGVCYIGVNLLGI).

This sequence belongs to the CcmF/CycK/Ccl1/NrfE/CcsA family. As to quaternary structure, may interact with ccs1.

It is found in the cellular thylakoid membrane. In terms of biological role, required during biogenesis of c-type cytochromes (cytochrome c6 and cytochrome f) at the step of heme attachment. The sequence is that of Cytochrome c biogenesis protein CcsA from Synechococcus sp. (strain CC9311).